The chain runs to 421 residues: Probable sugar-binding periplasmic protein (421 aa).

The first 27 residues, 1 to 27, serve as a signal peptide directing secretion; it reads MHKLLKLAAMGTAACALLAGMAPVANA.

The protein belongs to the bacterial solute-binding protein 1 family.

It localises to the periplasm. Part of a binding-protein-dependent transport system for a sugar. This Brucella suis biovar 1 (strain 1330) protein is Probable sugar-binding periplasmic protein.